We begin with the raw amino-acid sequence, 227 residues long: ATP-dependent dethiobiotin synthetase BioD (227 aa).

Position 12 to 17 (12 to 17) interacts with ATP; the sequence is DVGKTV. Residue Thr16 coordinates Mg(2+). Lys37 is a catalytic residue. Residue Thr41 participates in substrate binding. Residues Asp50, 110–113, 171–172, and 201–203 each bind ATP; these read EGAG, GS, and PAG. Mg(2+) is bound by residues Asp50 and Glu110.

Belongs to the dethiobiotin synthetase family. As to quaternary structure, homodimer. Requires Mg(2+) as cofactor.

It localises to the cytoplasm. The catalysed reaction is (7R,8S)-7,8-diammoniononanoate + CO2 + ATP = (4R,5S)-dethiobiotin + ADP + phosphate + 3 H(+). It functions in the pathway cofactor biosynthesis; biotin biosynthesis; biotin from 7,8-diaminononanoate: step 1/2. In terms of biological role, catalyzes a mechanistically unusual reaction, the ATP-dependent insertion of CO2 between the N7 and N8 nitrogen atoms of 7,8-diaminopelargonic acid (DAPA, also called 7,8-diammoniononanoate) to form a ureido ring. This is ATP-dependent dethiobiotin synthetase BioD from Rhodococcus erythropolis (strain PR4 / NBRC 100887).